Reading from the N-terminus, the 942-residue chain is Protein ZDS2 (942 aa).

Residues 1 to 28 are disordered; that stretch reads MVLMEDMQNKDGHNTVENSSGGTDSNNN. Over residues 15–28 the composition is skewed to polar residues; sequence TVENSSGGTDSNNN. Residue Ser50 is modified to Phosphoserine. Disordered stretches follow at residues 91-142, 483-541, 617-654, 682-728, and 788-817; these read SRNS…DDSI, SQES…NSSN, VVSSSESQPSKPTAPAVVEKKVELPTDTQASTHKKNSL, VKKE…DIDT, and SRDTTAGLEEDIGAEREDNTSPTAPQISTL. The span at 99–122 shows a compositional bias: basic and acidic residues; it reads SSKESLQESLHEENIIRSEQKEEQ. The segment covering 123–134 has biased composition (acidic residues); sequence GSEDNDAYEEGD. Composition is skewed to low complexity over residues 483–497, 518–541, and 617–627; these read SQESSLLSTDSSNNS, SSSEKSNTNNSEANHGWSWLNSSN, and VVSSSESQPSK. The segment covering 682-704 has biased composition (basic residues); the sequence is VKKELKKKASHSSLSKFRKSPKK. The segment covering 807 to 816 has biased composition (polar residues); sequence TSPTAPQIST.

The protein to yeast ZDS1/NRC1/CES1. As to quaternary structure, interacts with SKG6.

Functionally, acts as a negative regulator of polarized growth via an alternative mechanism to ZDS1. In heat-stressed cells appears to play a role in localizing BCY1 to the cytoplasm. Seems to interact with, and down-regulate, CDC42. Also acts as a suppressor of PKC1. May act as an integration point for distinct signaling pathways helping to maintain a balance among these different pathways. The chain is Protein ZDS2 (ZDS2) from Saccharomyces cerevisiae (strain ATCC 204508 / S288c) (Baker's yeast).